Consider the following 80-residue polypeptide: OMEGA-myrmeciitoxin(02)-Mg1a (80 aa).

An N-terminal signal peptide occupies residues 1–30 (MKNNYISTCIVYLMAALLLISVISIKECTA). An EGF-like domain is found at 35–75 (YGDPCSDDLKDYCIHGDCFFLKELNQPACRCYTGYYGSRCE). Intrachain disulfides connect C39–C52, C47–C63, and C65–C74.

The protein belongs to the EGF domain peptide family. As to expression, expressed by the venom gland.

The protein resides in the secreted. Ant peptide with probable defensive activity which acts as a potent agonist of the mammalian epidermal growth factor receptor (EGFR) (EC(50)=6.3 nM). Mimics, both structurally and functionally, vertebrate epidermal growth factor (EGF) peptide hormones. In vivo, intraplantar injection in mice causes long-lasting (several days) hypersensitivity of the injected paw to both mechanical and thermal stimuli. Its long-lasting effect is unusual for venom toxins whose effects are usually immediate. One possible explanation is that it would reduce the duration of a nest attack, discourage future attacks, or enhance the actions of subsequent exposure to other pain-inducing venom peptides. The chain is OMEGA-myrmeciitoxin(02)-Mg1a from Myrmecia gulosa (Red bulldog ant).